We begin with the raw amino-acid sequence, 650 residues long: Chaperone protein DnaK (650 aa).

A Phosphothreonine; by autocatalysis modification is found at threonine 200. Residues 612-636 (QQAGAAGAAGAAEGAAHAGGAQQAA) are compositionally biased toward low complexity. Residues 612 to 650 (QQAGAAGAAGAAEGAAHAGGAQQAADDVVDAEFKEVKKD) form a disordered region.

The protein belongs to the heat shock protein 70 family.

In terms of biological role, acts as a chaperone. The protein is Chaperone protein DnaK of Burkholderia ambifaria (strain ATCC BAA-244 / DSM 16087 / CCUG 44356 / LMG 19182 / AMMD) (Burkholderia cepacia (strain AMMD)).